The following is a 66-amino-acid chain: MKATFQVPSITCNHCVDKIEKFVGEIEGVSFIDVSVEKKSVVVEFDAPATQDLIKEALLDAGQEVV.

The region spanning 1–66 (MKATFQVPSI…ALLDAGQEVV (66 aa)) is the HMA domain. The Cu cation site is built by Cys-12 and Cys-15. Cys-12 and Cys-15 are joined by a disulfide.

In terms of biological role, part of a cation-transporting system which is associated with copper export out of the H.pylori cells. This Helicobacter pylori (strain ATCC 700392 / 26695) (Campylobacter pylori) protein is COP-associated protein (copP).